A 175-amino-acid polypeptide reads, in one-letter code: Sec-independent protein translocase protein TatB (175 aa).

Residues 1–21 traverse the membrane as a helical segment; the sequence is MLDLGLSKMALIGVVALVVLG. Over residues 96–115 the composition is skewed to low complexity; sequence VSPGGSAAADAPDGPSAASG. 2 disordered regions span residues 96-119 and 152-175; these read VSPGGSAAADAPDGPSAASGEPSW and QVQSGAARVARHRPASLRRPARFL. Basic residues predominate over residues 160 to 175; sequence VARHRPASLRRPARFL.

It belongs to the TatB family. The Tat system comprises two distinct complexes: a TatABC complex, containing multiple copies of TatA, TatB and TatC subunits, and a separate TatA complex, containing only TatA subunits. Substrates initially bind to the TatABC complex, which probably triggers association of the separate TatA complex to form the active translocon.

Its subcellular location is the cell inner membrane. Part of the twin-arginine translocation (Tat) system that transports large folded proteins containing a characteristic twin-arginine motif in their signal peptide across membranes. Together with TatC, TatB is part of a receptor directly interacting with Tat signal peptides. TatB may form an oligomeric binding site that transiently accommodates folded Tat precursor proteins before their translocation. In Burkholderia pseudomallei (strain 1710b), this protein is Sec-independent protein translocase protein TatB.